The primary structure comprises 394 residues: Alpha-2B adrenergic receptor (394 aa).

The chain crosses the membrane as a helical span at residues 1-25; that stretch reads AIAAVITFLILFTIFGNALVILAVL. The Cytoplasmic portion of the chain corresponds to 26–36; that stretch reads TSRSLRAPQNL. Residues 37-62 traverse the membrane as a helical segment; sequence FLVSLAAADILVATLIIPFSLANELL. Residues 63-72 lie on the Extracellular side of the membrane; the sequence is GYWYFRRTWC. C72 and C151 are joined by a disulfide. Residues 73–95 traverse the membrane as a helical segment; it reads EVYLALDVLFCTSSIVHLCAISL. Over 96–117 the chain is Cytoplasmic; it reads DRYWAVSRALEYNCKRTPRRIK. The helical transmembrane segment at 118–140 threads the bilayer; the sequence is CIILTVWLIAAAISLPPLIYKGD. At 141–156 the chain is on the extracellular side; the sequence is QGPQPHGAPQCKLNQE. A helical membrane pass occupies residues 157 to 180; sequence AWYILSSSLGSFFVPCLIMILVYL. Residues 181 to 358 are Cytoplasmic-facing; sequence RIYLIAKRSH…LSREKRFTFV (178 aa). Positions 191 to 318 are disordered; sequence RRGPRAKGGP…GSPPLQQPQG (128 aa). Over residues 281 to 298 the composition is skewed to acidic residues; it reads LEEEAEEEEEEEEEEDEP. Positions 299–312 are enriched in low complexity; sequence QAVPVSPASVGSPP. A helical transmembrane segment spans residues 359–382; that stretch reads LAVVIGVFVLCWFPFFFSYSLSAI. The Extracellular portion of the chain corresponds to 383–391; it reads CPQQCRVPH. A helical membrane pass occupies residues 392 to 394; the sequence is GLF.

It belongs to the G-protein coupled receptor 1 family. Adrenergic receptor subfamily. ADRA2B sub-subfamily. Interacts with RAB26. Interacts with PPP1R9B. Interacts with GGA1, GGA2 and GGA3.

The protein resides in the cell membrane. Functionally, alpha-2 adrenergic receptors mediate the catecholamine-induced inhibition of adenylate cyclase through the action of G proteins. This chain is Alpha-2B adrenergic receptor (ADRA2B), found in Oryctolagus cuniculus (Rabbit).